A 431-amino-acid chain; its full sequence is V-type ATP synthase beta chain (431 aa).

This sequence belongs to the ATPase alpha/beta chains family.

In terms of biological role, produces ATP from ADP in the presence of a proton gradient across the membrane. The V-type beta chain is a regulatory subunit. The sequence is that of V-type ATP synthase beta chain from Treponema denticola (strain ATCC 35405 / DSM 14222 / CIP 103919 / JCM 8153 / KCTC 15104).